A 409-amino-acid chain; its full sequence is Beta-glucanase (409 aa).

The first 31 residues, 1 to 31 (MRKNRGFSFSSKAVMMCCLAFLLIPASFAFA), serve as a signal peptide directing secretion. Catalysis depends on E95, which acts as the Proton donor. Residue D156 is the Nucleophile of the active site.

This sequence belongs to the glycosyl hydrolase 8 (cellulase D) family.

The catalysed reaction is Hydrolysis of (1-&gt;4)-beta-D-glucosidic linkages in beta-D-glucans containing (1-&gt;3)- and (1-&gt;4)-bonds.. This Niallia circulans (Bacillus circulans) protein is Beta-glucanase (bgc).